We begin with the raw amino-acid sequence, 216 residues long: Pyridoxine/pyridoxamine 5'-phosphate oxidase (216 aa).

Substrate contacts are provided by residues Arg-12–Tyr-15 and Lys-70. Residues Arg-65 to Lys-70, Tyr-80 to Thr-81, Arg-86, Lys-87, and Gln-109 each bind FMN. Residues Tyr-127 and Arg-131 each coordinate substrate. Residues Gln-144 to Ser-145 and Trp-189 contribute to the FMN site. Residue Arg-195–His-197 participates in substrate binding. Residue Arg-199 participates in FMN binding.

The protein belongs to the pyridoxamine 5'-phosphate oxidase family. As to quaternary structure, homodimer. FMN is required as a cofactor.

The enzyme catalyses pyridoxamine 5'-phosphate + O2 + H2O = pyridoxal 5'-phosphate + H2O2 + NH4(+). It carries out the reaction pyridoxine 5'-phosphate + O2 = pyridoxal 5'-phosphate + H2O2. The protein operates within cofactor metabolism; pyridoxal 5'-phosphate salvage; pyridoxal 5'-phosphate from pyridoxamine 5'-phosphate: step 1/1. Its pathway is cofactor metabolism; pyridoxal 5'-phosphate salvage; pyridoxal 5'-phosphate from pyridoxine 5'-phosphate: step 1/1. In terms of biological role, catalyzes the oxidation of either pyridoxine 5'-phosphate (PNP) or pyridoxamine 5'-phosphate (PMP) into pyridoxal 5'-phosphate (PLP). This chain is Pyridoxine/pyridoxamine 5'-phosphate oxidase, found in Blochmanniella pennsylvanica (strain BPEN).